A 274-amino-acid polypeptide reads, in one-letter code: 2,3,4,5-tetrahydropyridine-2,6-dicarboxylate N-succinyltransferase (274 aa).

2 residues coordinate substrate: Arg-106 and Asp-143.

This sequence belongs to the transferase hexapeptide repeat family. In terms of assembly, homotrimer.

Its subcellular location is the cytoplasm. The enzyme catalyses (S)-2,3,4,5-tetrahydrodipicolinate + succinyl-CoA + H2O = (S)-2-succinylamino-6-oxoheptanedioate + CoA. The protein operates within amino-acid biosynthesis; L-lysine biosynthesis via DAP pathway; LL-2,6-diaminopimelate from (S)-tetrahydrodipicolinate (succinylase route): step 1/3. This chain is 2,3,4,5-tetrahydropyridine-2,6-dicarboxylate N-succinyltransferase, found in Acidovorax sp. (strain JS42).